The primary structure comprises 95 residues: HssA/B-like protein 45 (95 aa).

Residues 1-31 (MTLFSSISSISNPMTSSKSSIASFGSGTSMS) are disordered.

Belongs to the hssA/B family.

The chain is HssA/B-like protein 45 (hssl45) from Dictyostelium discoideum (Social amoeba).